The following is a 453-amino-acid chain: MSKEEIWDKVLELAKNELTPISYSTWFEPPKTELIDIQENTAIILVESNFVQDFLKKQYTDIIADLIEKAIGTKLMPNFVIQEDLTEDKQVKDSAKAKSEAKPDVQAPQNSSEDQFNVHNTFETFVIGPGNRFPHAASLAVAEAPAKAYNPLFIYGGVGLGKTHLMHAIGHYVLENNRDAKVIYTSSEKFTNEFIKSIRDNETEQFREKYRNIDVLLIDDIQFIQNKEQTQEEFFHTFNDLHQTGKQIVISSDRPPKEIAKLEDRLRSRFEWGLIVDITPPDYETRMAILQKKLEEEDVDIPLESLTYIANQIQSNIRELEGALTRVIAYSRLQNEAITTELTAEALKDIIQTPKSKKITIQDIQKVVGQYYNVRLEDFAAKKRTKSIAYPRQIAMYLSRELTDFSLPKIGEEFGGRDHTTVIHAHMKIQTDMSEDPIFKQEVENLEKEIRNQ.

The tract at residues 1–73 is domain I, interacts with DnaA modulators; the sequence is MSKEEIWDKV…ADLIEKAIGT (73 aa). The segment at 73-114 is domain II; that stretch reads TKLMPNFVIQEDLTEDKQVKDSAKAKSEAKPDVQAPQNSSED. Residues 91-103 show a composition bias toward basic and acidic residues; sequence VKDSAKAKSEAKP. Residues 91–113 are disordered; the sequence is VKDSAKAKSEAKPDVQAPQNSSE. Positions 115–331 are domain III, AAA+ region; it reads QFNVHNTFET…GALTRVIAYS (217 aa). Residues glycine 159, glycine 161, lysine 162, and threonine 163 each contribute to the ATP site. The tract at residues 332 to 453 is domain IV, binds dsDNA; that stretch reads RLQNEAITTE…ENLEKEIRNQ (122 aa).

Belongs to the DnaA family. As to quaternary structure, oligomerizes as a right-handed, spiral filament on DNA at oriC.

The protein resides in the cytoplasm. Functionally, plays an essential role in the initiation and regulation of chromosomal replication. ATP-DnaA binds to the origin of replication (oriC) to initiate formation of the DNA replication initiation complex once per cell cycle. Binds the DnaA box (a 9 base pair repeat at the origin) and separates the double-stranded (ds)DNA. Forms a right-handed helical filament on oriC DNA; dsDNA binds to the exterior of the filament while single-stranded (ss)DNA is stabiized in the filament's interior. The ATP-DnaA-oriC complex binds and stabilizes one strand of the AT-rich DNA unwinding element (DUE), permitting loading of DNA polymerase. After initiation quickly degrades to an ADP-DnaA complex that is not apt for DNA replication. Binds acidic phospholipids. The polypeptide is Chromosomal replication initiator protein DnaA (Staphylococcus carnosus (strain TM300)).